We begin with the raw amino-acid sequence, 484 residues long: Cytochrome P450 monooxygenase poxD (484 aa).

Residues 2–24 (VSPVVLATTAMIVVFLLAQRYLS) traverse the membrane as a helical segment. Cys429 lines the heme pocket.

This sequence belongs to the cytochrome P450 family. Heme serves as cofactor.

The protein localises to the membrane. It functions in the pathway secondary metabolite biosynthesis. Cytochrome P450 monooxygenase; part of the gene cluster that mediates the biosynthesis of oxaleimides, cytotoxic compounds containing an unusual disubstituted succinimide moiety. The first step of the pathway is provided by the HR-PKS poxF that serves in a new mode of collaborative biosynthesis with the PKS-NRPS poxE, by providing the olefin containing amino acid substrate via the synthesis of an ACP-bound dec-4-enoate. The cytochrome P450 monooxygenase poxM-catalyzed oxidation at the alpha-position creates the enzyme-bound 2-hydroxydec-4-enoyl-ACP thioester, which may be prone to spontaneous hydrolysis to yield 2-hydroxydec-4-enoic acid due to increased electrophilicity of the carbonyl. 2-hydroxydec-4-enoic acid can then be further oxidized by poxM to yield the alpha-ketoacid 2-oxodec-4-enoicacid, which is reductively aminated by the aminotransferase poxL to yield (S,E)-2-aminodec-4-enoic acid. The Hybrid PKS-NRPS synthetase poxE then performs condensation between the octaketide product of its PKS modules and the amino group of (S,E)-2-aminodec-4-enoic acid which is activated and incorporated by the adenylation domain. The resulting aminoacyl product can be cyclized by the Diels-Alderase PoxQ and reductively released by the reductive (R) domain of poxE to yield an aldehyde intermediate. The released aldehyde is then substrate for a Knoevenagel condensation by the hydrolyase poxO followed by an oxidation at the 5-position of the pyrrolidone ring. The presence of the olefin from the amino acid building block allows for migration of the substituted allyl group to occur. This allylic transposition reaction takes place in a conjugate addition, semipinacol-like fashion to yield a succinimide intermediate. Iterative two-electron oxidations of the C7 methyl of the succinimide intermediate to the carboxylic acid can be catalyzed by one of two remaining cytochrome P450 monooxygenasess poxC or poxD to yield oxaleimide A. Subsequent oxidation yields the maleimide scaffold oxaleimide I. Both oxaleimide A and oxaleimide I can undergo oxidative modifications in the decalin ring to yield the series of products oxaleimides B to H. This Penicillium oxalicum protein is Cytochrome P450 monooxygenase poxD.